The following is a 357-amino-acid chain: Chorismate synthase (357 aa).

Arg47 provides a ligand contact to NADP(+). Residues 123–125 (RAS), Gly281, 296–300 (KPTSS), and Arg324 contribute to the FMN site.

It belongs to the chorismate synthase family. In terms of assembly, homotetramer. FMNH2 is required as a cofactor.

The enzyme catalyses 5-O-(1-carboxyvinyl)-3-phosphoshikimate = chorismate + phosphate. Its pathway is metabolic intermediate biosynthesis; chorismate biosynthesis; chorismate from D-erythrose 4-phosphate and phosphoenolpyruvate: step 7/7. In terms of biological role, catalyzes the anti-1,4-elimination of the C-3 phosphate and the C-6 proR hydrogen from 5-enolpyruvylshikimate-3-phosphate (EPSP) to yield chorismate, which is the branch point compound that serves as the starting substrate for the three terminal pathways of aromatic amino acid biosynthesis. This reaction introduces a second double bond into the aromatic ring system. The chain is Chorismate synthase from Chlamydia trachomatis serovar A (strain ATCC VR-571B / DSM 19440 / HAR-13).